The chain runs to 451 residues: F-box only protein 47 (451 aa).

Residues 41–91 form the F-box domain; sequence LGNFKVLPLEILHIILRYLSVKDIGMLSMVSKTVSQHIINYISTSSGSRRL.

As to quaternary structure, part of a SCF (SKP1-cullin-F-box) protein ligase complex.

Its function is as follows. Probably recognizes and binds to some phosphorylated proteins and promotes their ubiquitination and degradation. In Mus musculus (Mouse), this protein is F-box only protein 47 (Fbxo47).